A 387-amino-acid polypeptide reads, in one-letter code: Structural protein ORF387 (387 aa).

A coiled-coil region spans residues Lys-315–Ser-387. The disordered stretch occupies residues Leu-365–Ser-387.

It localises to the virion. The sequence is that of Structural protein ORF387 from Acidianus convivator (ATV).